A 494-amino-acid polypeptide reads, in one-letter code: Glutamate--tRNA ligase (494 aa).

Positions 9-19 match the 'HIGH' region motif; the sequence is PSPTGPLHIGS. Positions 249–253 match the 'KMSKS' region motif; that stretch reads KLSKR. Residue Lys-252 participates in ATP binding.

This sequence belongs to the class-I aminoacyl-tRNA synthetase family. Glutamate--tRNA ligase type 1 subfamily. As to quaternary structure, monomer.

Its subcellular location is the cytoplasm. It catalyses the reaction tRNA(Glu) + L-glutamate + ATP = L-glutamyl-tRNA(Glu) + AMP + diphosphate. Its function is as follows. Catalyzes the attachment of glutamate to tRNA(Glu) in a two-step reaction: glutamate is first activated by ATP to form Glu-AMP and then transferred to the acceptor end of tRNA(Glu). This is Glutamate--tRNA ligase from Azobacteroides pseudotrichonymphae genomovar. CFP2.